The primary structure comprises 375 residues: Platelet-derived growth factor receptor-like protein (375 aa).

The signal sequence occupies residues 1–21; it reads MKVWLLLGLLLVHEALEDVTG. Residues 22-64 are disordered; it reads QHLPKNKRPKEPGENRIKPTNKKVKPKIPKMKDRDSANSAPKT. A compositionally biased stretch (basic residues) spans 40–50; it reads PTNKKVKPKIP. The 98-residue stretch at 62–159 folds into the Ig-like C2-type 1 domain; sequence PKTQSIMMQV…GYICRKDEAK (98 aa). A disulfide bridge connects residues cysteine 96 and cysteine 143. N-linked (GlcNAc...) asparagine glycans are attached at residues asparagine 132 and asparagine 219. Residues 272–375 enclose the Ig-like C2-type 2 domain; it reads PSTTILASSN…TTVATTVEFS (104 aa). Cysteines 293 and 357 form a disulfide.

As to quaternary structure, forms a complex composed of PDGFRL, TNK2 and GRB2. In terms of tissue distribution, expressed in colon, lung and liver.

The protein localises to the secreted. The chain is Platelet-derived growth factor receptor-like protein (PDGFRL) from Homo sapiens (Human).